Reading from the N-terminus, the 178-residue chain is Large ribosomal subunit protein uL6 (178 aa).

Belongs to the universal ribosomal protein uL6 family. Part of the 50S ribosomal subunit.

In terms of biological role, this protein binds to the 23S rRNA, and is important in its secondary structure. It is located near the subunit interface in the base of the L7/L12 stalk, and near the tRNA binding site of the peptidyltransferase center. This Francisella tularensis subsp. holarctica (strain FTNF002-00 / FTA) protein is Large ribosomal subunit protein uL6.